Reading from the N-terminus, the 471-residue chain is Casein kinase 1-like protein 9 (471 aa).

The Protein kinase domain occupies 9 to 278 (FKLGRKIGSG…LKRLFRDLFI (270 aa)). Residues 15–23 (IGSGSFGEL) and Lys38 each bind ATP. The active-site Proton acceptor is the Asp128. The tract at residues 300–471 (SSSGSSSRTR…RSLELLTLRK (172 aa)) is disordered. The span at 325 to 339 (EKQERIAGKETRENR) shows a compositional bias: basic and acidic residues. Positions 385-430 (SSRYGSSSRRAIPSSSRPSSAGGPSDSRSSSRLVTSTGGVGTVSNR) are enriched in low complexity. A compositionally biased stretch (polar residues) spans 431–449 (ASTSQRIQAGNESRTSSFS). The segment covering 454–464 (NTREDPLRRSL) has biased composition (basic and acidic residues).

Belongs to the protein kinase superfamily. CK1 Ser/Thr protein kinase family. Casein kinase I subfamily. In terms of assembly, monomer. In terms of processing, autophosphorylated on serine, threonine and tyrosine residues. As to expression, expressed in leaves, stems and flowers.

The protein localises to the cytoplasm. The protein resides in the nucleus. It catalyses the reaction L-seryl-[protein] + ATP = O-phospho-L-seryl-[protein] + ADP + H(+). The enzyme catalyses L-threonyl-[protein] + ATP = O-phospho-L-threonyl-[protein] + ADP + H(+). Its function is as follows. Casein kinases are operationally defined by their preferential utilization of acidic proteins such as caseins as substrates. Can phosphorylate casein on serine and threonine residues, and poly(Glu,Tyr) in vitro. This is Casein kinase 1-like protein 9 from Arabidopsis thaliana (Mouse-ear cress).